Here is a 288-residue protein sequence, read N- to C-terminus: Probable ketoamine kinase VP1481 (288 aa).

92-94 (NYL) serves as a coordination point for ATP. The active-site Proton acceptor is the Asp-195.

Belongs to the fructosamine kinase family.

Its function is as follows. Ketoamine kinase that phosphorylates ketoamines on the third carbon of the sugar moiety to generate ketoamine 3-phosphate. The protein is Probable ketoamine kinase VP1481 of Vibrio parahaemolyticus serotype O3:K6 (strain RIMD 2210633).